Consider the following 316-residue polypeptide: Ribosomal RNA small subunit methyltransferase H (316 aa).

S-adenosyl-L-methionine contacts are provided by residues 35–37 (GGH), Asp55, Phe79, Asp101, and Gln108.

It belongs to the methyltransferase superfamily. RsmH family.

It localises to the cytoplasm. The catalysed reaction is cytidine(1402) in 16S rRNA + S-adenosyl-L-methionine = N(4)-methylcytidine(1402) in 16S rRNA + S-adenosyl-L-homocysteine + H(+). Its function is as follows. Specifically methylates the N4 position of cytidine in position 1402 (C1402) of 16S rRNA. The chain is Ribosomal RNA small subunit methyltransferase H from Aliivibrio salmonicida (strain LFI1238) (Vibrio salmonicida (strain LFI1238)).